Here is a 251-residue protein sequence, read N- to C-terminus: Small ribosomal subunit protein uS2B (251 aa).

An N-acetylserine modification is found at Ser2. Residues 214–225 (AVEEASATGATE) show a composition bias toward low complexity. The tract at residues 214–251 (AVEEASATGATEEATEEATEETTEATEWAEDNTENATW) is disordered. Residues 226–251 (EATEEATEETTEATEWAEDNTENATW) show a composition bias toward acidic residues.

Belongs to the universal ribosomal protein uS2 family. As to quaternary structure, component of the small ribosomal subunit. Mature ribosomes consist of a small (40S) and a large (60S) subunit. The 40S subunit contains about 33 different proteins and 1 molecule of RNA (18S). The 60S subunit contains about 49 different proteins and 3 molecules of RNA (25S, 5.8S and 5S). Interacts with RPS21.

Its subcellular location is the cytoplasm. Required for the assembly and/or stability of the 40S ribosomal subunit. Required for the processing of the 20S rRNA-precursor to mature 18S rRNA in a late step of the maturation of 40S ribosomal subunits. This chain is Small ribosomal subunit protein uS2B, found in Vanderwaltozyma polyspora (strain ATCC 22028 / DSM 70294 / BCRC 21397 / CBS 2163 / NBRC 10782 / NRRL Y-8283 / UCD 57-17) (Kluyveromyces polysporus).